The primary structure comprises 243 residues: Leucyl/phenylalanyl-tRNA--protein transferase (243 aa).

The protein belongs to the L/F-transferase family.

Its subcellular location is the cytoplasm. The enzyme catalyses N-terminal L-lysyl-[protein] + L-leucyl-tRNA(Leu) = N-terminal L-leucyl-L-lysyl-[protein] + tRNA(Leu) + H(+). It carries out the reaction N-terminal L-arginyl-[protein] + L-leucyl-tRNA(Leu) = N-terminal L-leucyl-L-arginyl-[protein] + tRNA(Leu) + H(+). The catalysed reaction is L-phenylalanyl-tRNA(Phe) + an N-terminal L-alpha-aminoacyl-[protein] = an N-terminal L-phenylalanyl-L-alpha-aminoacyl-[protein] + tRNA(Phe). Functionally, functions in the N-end rule pathway of protein degradation where it conjugates Leu, Phe and, less efficiently, Met from aminoacyl-tRNAs to the N-termini of proteins containing an N-terminal arginine or lysine. This is Leucyl/phenylalanyl-tRNA--protein transferase from Saccharophagus degradans (strain 2-40 / ATCC 43961 / DSM 17024).